The chain runs to 121 residues: UPF0102 protein Strop_1320 (121 aa).

The protein belongs to the UPF0102 family.

The protein is UPF0102 protein Strop_1320 of Salinispora tropica (strain ATCC BAA-916 / DSM 44818 / JCM 13857 / NBRC 105044 / CNB-440).